Reading from the N-terminus, the 337-residue chain is Gastrula zinc finger protein XlCGF26.1 (337 aa).

C2H2-type zinc fingers lie at residues 6 to 28 (FDCT…YKIH), 34 to 56 (FICA…SKIH), 62 to 84 (FPCT…NKIH), 90 to 112 (FICA…SKIH), 118 to 140 (FPCT…NKIH), 146 to 168 (FICA…SKIH), 174 to 196 (FPCT…NKIH), 202 to 224 (FTCT…VKIH), 230 to 252 (FTCT…NKIH), 258 to 280 (FTCT…FKIH), 286 to 309 (FSCT…KRTH), and 315 to 337 (FTCT…NKIH).

It belongs to the krueppel C2H2-type zinc-finger protein family.

Its subcellular location is the nucleus. Functionally, may be involved in transcriptional regulation. This is Gastrula zinc finger protein XlCGF26.1 from Xenopus laevis (African clawed frog).